The primary structure comprises 434 residues: MPNRRASRNAYYFFVQEKIPELRRRGLPVARVADAIPYCSADWALLREDEKEKYSEMAREWRAAQGKDSGPSEKQKLVSTPLRRPGMLVPKPSISPPDMSNLSIKSDQALLGGIFYFLNIFSHGELPPHCEQRFLPCEIGCVKYSLQEGIMADFHSFIHPGEIPRGFRFHCQAASDSSHKIPISNFEFGHDQATVLQNLYKFIHPNPGNWPPIYCKSDDRARVNWCLKRMERASEIRQDLELLTVEDLVVGIYQQKFLKEPSKTWVRSLLDVAMWDYSSNTRCKWHEENDILFCALAVCKKIAYCISNSLATLFGIQLTGAHVPLQDYEASNSVTPKMVVLDAGRYQKLRVESPGFCHFNSYNQEQRSNTSTGYYPSGVKISGPHSSVRGRGITRLLESISNSSNNIHRFSSCETSLSPYTPQKDGYKPFSSFS.

The HMG box DNA-binding region spans 4–73 (RRASRNAYYF…AQGKDSGPSE (70 aa)).

The protein belongs to the maelstrom family. Interacts with SMARCB1, SIN3B and DDX4. Interacts with piRNA-associated proteins TDRD1, PIWIL1 and PIWIL2. Interacts with Tex19.1 and, probably, Tex19.2. Testis-specific. Present in spermatocytes and round and early elongating spermatids.

It localises to the cytoplasm. Its subcellular location is the nucleus. In terms of biological role, plays a central role during spermatogenesis by repressing transposable elements and preventing their mobilization, which is essential for the germline integrity. Acts via the piRNA metabolic process, which mediates the repression of transposable elements during meiosis by forming complexes composed of piRNAs and Piwi proteins and governs the methylation and subsequent repression of transposons. Its association with piP-bodies suggests a participation in the secondary piRNAs metabolic process. Required for the localization of germ-cell factors to the meiotic nuage. The sequence is that of Protein maelstrom homolog from Mus musculus (Mouse).